The following is a 512-amino-acid chain: Rab11 family-interacting protein 2 (512 aa).

One can recognise a C2 domain in the interval 1–120; sequence MMLSEQAQKW…DKQRRKTEWF (120 aa). The necessary for its cellular translocation to the plasma membrane stretch occupies residues 15–102; the sequence is VQVTVLQAKD…GLDKFLGQVA (88 aa). Disordered regions lie at residues 169–239 and 262–285; these read DKMK…MSSE and VPESGSLKSPHRRTLSFDTSKMNQ. Positions 178 to 188 are enriched in polar residues; it reads GTFSDTSSAII. Positions 226-236 are enriched in low complexity; that stretch reads HSMSDLSGSHM. S227 carries the phosphoserine; by MARK2 modification. The residue at position 277 (S277) is a Phosphoserine. An NPF 1 motif is present at residues 323-325; the sequence is NPF. Residues 361–374 show a composition bias toward basic and acidic residues; sequence ERVTGKKDSRRSDK. The tract at residues 361-392 is disordered; the sequence is ERVTGKKDSRRSDKLNNGGSDSPCDLKSPNAF. 2 short sequence motifs (NPF) span residues 406–408 and 440–442; these read NPF. The FIP-RBD domain occupies 437 to 499; it reads PDSNPFDATA…EETPSILRVP (63 aa). Residues 465–512 form a necessary for interaction with AP2A1, RAB11A, subcellular location, endocytosis activity and homooligomerization region; the sequence is ELLRRKDTHIRELEDYIDNLLVRVMEETPSILRVPYEPSRKAGKFSNS.

In terms of assembly, homooligomerizes in a Rab11-independent manner. Forms a heterooligomeric complex with RAB11FIP4. Interacts with AP2A1, MYO5B, RAB25 and REPS1. Interacts with RAB11A and RAB11B (activated GTP-bound form). Interacts with NPC1L1. Interacts (via NPF motifs) with EHD1 and EHD3. Interacts with TICAM2; this interaction directs RAB11FIP2 to the phagosome. Interacts with RAB14 and RAB25 (GTP-bound forms). In terms of processing, phosphorylation at Ser-227 by MARK2 regulates epithelial cell polarity.

Its subcellular location is the cell projection. The protein resides in the phagocytic cup. The protein localises to the cell membrane. It localises to the recycling endosome membrane. Its function is as follows. A Rab11 effector binding preferentially phosphatidylinositol 3,4,5-trisphosphate (PtdInsP3) and phosphatidic acid (PA) and acting in the regulation of the transport of vesicles from the endosomal recycling compartment (ERC) to the plasma membrane. Involved in insulin granule exocytosis. Also involved in receptor-mediated endocytosis and membrane trafficking of recycling endosomes, probably originating from clathrin-coated vesicles. Required in a complex with MYO5B and RAB11 for the transport of NPC1L1 to the plasma membrane. Also acts as a regulator of cell polarity. Plays an essential role in phagocytosis through a mechanism involving TICAM2, RAC1 and CDC42 Rho GTPases for controlling actin-dynamics. This chain is Rab11 family-interacting protein 2 (RAB11FIP2), found in Homo sapiens (Human).